Here is a 393-residue protein sequence, read N- to C-terminus: Isocitrate dehydrogenase [NADP] (393 aa).

Residues S102, N104, R108, R118, and R142 each contribute to the D-threo-isocitrate site. Residue D283 participates in Mg(2+) binding.

The protein belongs to the isocitrate and isopropylmalate dehydrogenases family. Homodimer. Mg(2+) serves as cofactor. Mn(2+) is required as a cofactor.

The catalysed reaction is D-threo-isocitrate + NADP(+) = 2-oxoglutarate + CO2 + NADPH. Its function is as follows. Catalyzes the oxidative decarboxylation of isocitrate to 2-oxoglutarate and carbon dioxide with the concomitant reduction of NADP(+). This Streptococcus mutans serotype c (strain ATCC 700610 / UA159) protein is Isocitrate dehydrogenase [NADP] (icd).